The following is a 356-amino-acid chain: Tyrosine recombinase XerS (356 aa).

The Core-binding (CB) domain occupies 16–121; the sequence is IMPWYVLDYY…ALSSLYKYLT (106 aa). Residues 169-354 form the Tyr recombinase domain; it reads AFLDYVDKEY…VNDEQKNALD (186 aa). Catalysis depends on residues Arg210, Lys234, His306, Arg309, and His332. Tyr341 acts as the O-(3'-phospho-DNA)-tyrosine intermediate in catalysis.

This sequence belongs to the 'phage' integrase family. XerS subfamily.

Its subcellular location is the cytoplasm. FtsK is required for recombination. In terms of biological role, site-specific tyrosine recombinase, which acts by catalyzing the cutting and rejoining of the recombining DNA molecules. Essential to convert dimers of the bacterial chromosome into monomers to permit their segregation at cell division. The protein is Tyrosine recombinase XerS of Streptococcus equi subsp. equi (strain 4047).